A 93-amino-acid chain; its full sequence is Large ribosomal subunit protein eL37A (93 aa).

Zn(2+)-binding residues include Cys-19, Cys-22, Cys-34, and Cys-37. A C4-type zinc finger spans residues 19-37 (CRRCGRSSYHIQKSTCAQC).

The protein belongs to the eukaryotic ribosomal protein eL37 family. It depends on Zn(2+) as a cofactor.

Functionally, binds to the 23S rRNA. This Drosophila melanogaster (Fruit fly) protein is Large ribosomal subunit protein eL37A.